The primary structure comprises 75 residues: SPbeta prophage-derived uncharacterized protein YorX (75 aa).

The sequence is that of SPbeta prophage-derived uncharacterized protein YorX (yorX) from Bacillus subtilis (strain 168).